Here is a 177-residue protein sequence, read N- to C-terminus: Large ribosomal subunit protein uL10 (177 aa).

The protein belongs to the universal ribosomal protein uL10 family. In terms of assembly, part of the ribosomal stalk of the 50S ribosomal subunit. The N-terminus interacts with L11 and the large rRNA to form the base of the stalk. The C-terminus forms an elongated spine to which L12 dimers bind in a sequential fashion forming a multimeric L10(L12)X complex.

Forms part of the ribosomal stalk, playing a central role in the interaction of the ribosome with GTP-bound translation factors. The chain is Large ribosomal subunit protein uL10 from Kocuria rhizophila (strain ATCC 9341 / DSM 348 / NBRC 103217 / DC2201).